The following is a 210-amino-acid chain: dTTP/UTP pyrophosphatase (210 aa).

Asp89 serves as the catalytic Proton acceptor.

This sequence belongs to the Maf family. YhdE subfamily. Requires a divalent metal cation as cofactor.

It localises to the cytoplasm. The enzyme catalyses dTTP + H2O = dTMP + diphosphate + H(+). It carries out the reaction UTP + H2O = UMP + diphosphate + H(+). Nucleoside triphosphate pyrophosphatase that hydrolyzes dTTP and UTP. May have a dual role in cell division arrest and in preventing the incorporation of modified nucleotides into cellular nucleic acids. This chain is dTTP/UTP pyrophosphatase, found in Burkholderia lata (strain ATCC 17760 / DSM 23089 / LMG 22485 / NCIMB 9086 / R18194 / 383).